Here is a 1259-residue protein sequence, read N- to C-terminus: Trafficking protein particle complex II-specific subunit 130 homolog (1259 aa).

Alanine 2 bears the N-acetylalanine mark. The disordered stretch occupies residues 479–526 (GNIPEMFDGRPSFTEGSGLEASPRTPSSLKVQAPPMSRTNSSPGNFES).

This sequence belongs to the TMEM1 family. Part of the multisubunit TRAPP (transport protein particle) II complex composed of BET3, BET5, TRS20, TRS23, TRS31, TRS33, TRS65, TRS85, TRS120 and TRS130.

It localises to the golgi apparatus. Its subcellular location is the trans-Golgi network. The protein resides in the early endosome. In terms of biological role, specific subunit of the TRAPP II complex, a highly conserved vesicle tethering complex that is required for the proper transport of proteins in post-Golgi trafficking pathways to the growing cell plate in mitotic active cells. Required for the polarized and selective transport of PIN2, but not PIN1, to the plasma membrane. Not required for ER-to-Golgi as well as biosynthetic and endocytic vacuolar transport. The polypeptide is Trafficking protein particle complex II-specific subunit 130 homolog (Arabidopsis thaliana (Mouse-ear cress)).